Consider the following 407-residue polypeptide: MMVARTRSQKRKLEEINNQKKIKTKKKATGQQTSNTKNLRDVKKKGKQLAYVPRTSPRKSYKNGEYVLAKMSSFPWWPARVASQKSIPTEVRERLKRNFRMDNGIFVQFLPSRDYAIISSSNVLPLTVDESRFILDHDLSTKYIQKTVGLIIASVKRKVSFSDVEEDEFEPENTRKKLQKPIEKPKKEKIEATPKIDGGKRLKNEKSSAEISQTSKQRPSRRSARVRMATDNAQKSPSPIPSPKKTAKKRVRFAGSLEELPKFSLEYQLAQPISTVDMYAQVHYIRFNTLLYYRYQLQEILLSYNHYPQESDMSHVHQILEMIENFSAINSELLESTKLYSLFTLLVKLSDIPLDEKYDFSSRFSTLLLQFQAFVQPKTMTSNVSTAPIGKNAQVNTEAARPSVITT.

The segment at 1 to 46 (MMVARTRSQKRKLEEINNQKKIKTKKKATGQQTSNTKNLRDVKKKG) is disordered. Residues 63 to 129 (NGEYVLAKMS…SSNVLPLTVD (67 aa)) enclose the PWWP domain. Phosphoserine is present on residues S160 and S162. The segment at 163–248 (DVEEDEFEPE…PIPSPKKTAK (86 aa)) is disordered. The segment covering 172 to 208 (ENTRKKLQKPIEKPKKEKIEATPKIDGGKRLKNEKSS) has biased composition (basic and acidic residues). Residues S236, S238, and S242 each carry the phosphoserine modification.

Component of the mst2 complex composed of at least eaf6, mst2, nto1, pdp3, ptf1, ptf2 and tfg3.

It localises to the nucleus. Component of the mst2 complex which is a highly specific H3 lysine 14 (H3K14) acetyltransferase that functions together with gcn5 to regulate global levels of H3K14 acetylation (H3K14ac), critical for DNA damage checkpoint activation. The polypeptide is PWWP domain-containing protein 3 (pdp3) (Schizosaccharomyces pombe (strain 972 / ATCC 24843) (Fission yeast)).